A 263-amino-acid chain; its full sequence is Small ribosomal subunit protein eS1 (263 aa).

Basic and acidic residues predominate over residues 235-254 (HGEGGGGKREAGDKSERPEG). The interval 235–263 (HGEGGGGKREAGDKSERPEGYEPPVQESV) is disordered.

The protein belongs to the eukaryotic ribosomal protein eS1 family. Component of the small ribosomal subunit. Mature ribosomes consist of a small (40S) and a large (60S) subunit. The 40S subunit contains about 33 different proteins and 1 molecule of RNA (18S). The 60S subunit contains about 49 different proteins and 3 molecules of RNA (28S, 5.8S and 5S).

It is found in the cytoplasm. In Bombyx mandarina (Wild silk moth), this protein is Small ribosomal subunit protein eS1.